Here is a 207-residue protein sequence, read N- to C-terminus: MKVQVLNLDGTAGKGEVELSDDVFGLEPRADILHRVVTWQLENRRGIARKARERSDVARTGKKFGRQKGGGTARHGDRKAPIFIGGGKAHGPRVREFNISLNKKVRALGLKMALSSKAKAGLVVVDNLDVDAKTKALVGQLAKANWGKKVLVIDGEGVNDNFAKAARNIVGVNVLPAIGANVYDILKHDTLVLTRAAVEKLEARFNG.

The disordered stretch occupies residues 53 to 85; that stretch reads ERSDVARTGKKFGRQKGGGTARHGDRKAPIFIG.

Belongs to the universal ribosomal protein uL4 family. In terms of assembly, part of the 50S ribosomal subunit.

One of the primary rRNA binding proteins, this protein initially binds near the 5'-end of the 23S rRNA. It is important during the early stages of 50S assembly. It makes multiple contacts with different domains of the 23S rRNA in the assembled 50S subunit and ribosome. Its function is as follows. Forms part of the polypeptide exit tunnel. The sequence is that of Large ribosomal subunit protein uL4 from Novosphingobium aromaticivorans (strain ATCC 700278 / DSM 12444 / CCUG 56034 / CIP 105152 / NBRC 16084 / F199).